Reading from the N-terminus, the 120-residue chain is MNAQDIIRSIEAEQMKTDLPVIYVGDRVRVGVKIKEGDKERVQPYEGDVIAMRNTGINRTITVRRVFQGVGVERVFLLHSPRIDSIKVIQRGKVRRAKLYYLRDRMGKASRIKPRFDRPL.

It belongs to the bacterial ribosomal protein bL19 family.

Functionally, this protein is located at the 30S-50S ribosomal subunit interface and may play a role in the structure and function of the aminoacyl-tRNA binding site. The polypeptide is Large ribosomal subunit protein bL19 (Thermosynechococcus vestitus (strain NIES-2133 / IAM M-273 / BP-1)).